The following is a 313-amino-acid chain: Deoxyribonucleoside regulator (313 aa).

The H-T-H motif DNA-binding region spans 23 to 42 (QQQIAEQLNISRPTVSRLLQ).

It belongs to the SorC transcriptional regulatory family. As to quaternary structure, homooctamer.

In terms of biological role, negative regulator of the dra-nupC-pdp operon. DeoR binds cooperatively to the operator DNA, which consists of a palindrome and a direct repeat sequence located 3' to the palindrome. This is Deoxyribonucleoside regulator from Bacillus subtilis (strain 168).